The chain runs to 190 residues: UPF0301 protein RSc0675 (190 aa).

Belongs to the UPF0301 (AlgH) family.

The protein is UPF0301 protein RSc0675 of Ralstonia nicotianae (strain ATCC BAA-1114 / GMI1000) (Ralstonia solanacearum).